We begin with the raw amino-acid sequence, 439 residues long: Ribosomal protein uS12 methylthiotransferase RimO (439 aa).

The MTTase N-terminal domain occupies 5 to 116; the sequence is PTIAISHLGC…IVNVIERVEL (112 aa). [4Fe-4S] cluster is bound by residues Cys-14, Cys-50, Cys-79, Cys-154, Cys-158, and Cys-161. One can recognise a Radical SAM core domain in the interval 140-369; that stretch reads TTTEGVAYLR…MELQQPISQK (230 aa). Positions 372 to 438 constitute a TRAM domain; sequence QQEVGKIVDV…TYDLYGQVVN (67 aa).

This sequence belongs to the methylthiotransferase family. RimO subfamily. [4Fe-4S] cluster serves as cofactor.

The protein localises to the cytoplasm. The catalysed reaction is L-aspartate(89)-[ribosomal protein uS12]-hydrogen + (sulfur carrier)-SH + AH2 + 2 S-adenosyl-L-methionine = 3-methylsulfanyl-L-aspartate(89)-[ribosomal protein uS12]-hydrogen + (sulfur carrier)-H + 5'-deoxyadenosine + L-methionine + A + S-adenosyl-L-homocysteine + 2 H(+). Its function is as follows. Catalyzes the methylthiolation of an aspartic acid residue of ribosomal protein uS12. The chain is Ribosomal protein uS12 methylthiotransferase RimO from Nostoc punctiforme (strain ATCC 29133 / PCC 73102).